Reading from the N-terminus, the 140-residue chain is Protein archease (140 aa).

Residues aspartate 12, aspartate 139, and leucine 140 each contribute to the Ca(2+) site.

The protein belongs to the archease family.

In terms of biological role, activates the tRNA-splicing ligase complex by facilitating the enzymatic turnover of catalytic subunit RtcB. Acts by promoting the guanylylation of RtcB, a key intermediate step in tRNA ligation. Can also alter the NTP specificity of RtcB such that ATP, dGTP or ITP is used efficiently. May also act as a chaperone or modulator of proteins involved in DNA or RNA processing. The chain is Protein archease from Methanothermobacter thermautotrophicus (strain ATCC 29096 / DSM 1053 / JCM 10044 / NBRC 100330 / Delta H) (Methanobacterium thermoautotrophicum).